Reading from the N-terminus, the 176-residue chain is Neuroblastoma suppressor of tumorigenicity 1 (176 aa).

The first 17 residues, 1-17, serve as a signal peptide directing secretion; it reads MTVWLLIGFLLPVAIFA. 5 disulfides stabilise this stretch: Cys34–Cys84, Cys48–Cys98, Cys58–Cys117, Cys62–Cys119, and Cys81–Cys122. One can recognise a CTCK domain in the interval 34-123; it reads CEAKNITQIV…ILQCSCQACG (90 aa). The disordered stretch occupies residues 148–176; sequence ETLGHHHHRPPAREEDSPAQSQREGESEE.

Belongs to the DAN family. In terms of assembly, interacts with bmp2; the interaction is blocked in presence of nog.

Its subcellular location is the secreted. In terms of biological role, may act as a tumor suppressor. Cytokine that has an axial patterning activity. Acts like bone morpho-genetic protein (BMP) antagonist in embryonic explants. Blocks the bmp2 activity. In Xenopus tropicalis (Western clawed frog), this protein is Neuroblastoma suppressor of tumorigenicity 1 (nbl1).